The primary structure comprises 161 residues: Pro-corazonin (161 aa).

Positions 1–20 (MMRLLLLPLFLFTLSMACMG) are cleaved as a signal peptide. Residue glutamine 21 is modified to Pyrrolidone carboxylic acid. Asparagine 31 bears the Asparagine amide mark. Positions 70 to 161 (LERCLAQLQR…SGEPSVFGKH (92 aa)) are excised as a propeptide. 2 disordered regions span residues 93 to 125 (NANR…TPIQ) and 142 to 161 (VAGS…FGKH). A compositionally biased stretch (low complexity) spans 102–117 (SDSGSSRNRANNNNEN).

Belongs to the corazonin family.

The protein localises to the secreted. Its function is as follows. Cardioactive peptide. Corazonin is probably involved in the physiological regulation of the heart beat. Clock (Clk) and cycle (cyc) proteins negatively regulate Crz transcription in a cell-specific manner. The sequence is that of Pro-corazonin from Drosophila pseudoobscura pseudoobscura (Fruit fly).